A 339-amino-acid chain; its full sequence is DNA-directed RNA polymerase subunit alpha (339 aa).

The alpha N-terminal domain (alpha-NTD) stretch occupies residues 1-235; that stretch reads MVIQKNWQEL…DQLQVFVNFE (235 aa). Positions 251–339 are alpha C-terminal domain (alpha-CTD); that stretch reads FNPALLKKVD…DLAKRFEEHY (89 aa).

Belongs to the RNA polymerase alpha chain family. As to quaternary structure, homodimer. The RNAP catalytic core consists of 2 alpha, 1 beta, 1 beta' and 1 omega subunit. When a sigma factor is associated with the core the holoenzyme is formed, which can initiate transcription.

It carries out the reaction RNA(n) + a ribonucleoside 5'-triphosphate = RNA(n+1) + diphosphate. DNA-dependent RNA polymerase catalyzes the transcription of DNA into RNA using the four ribonucleoside triphosphates as substrates. The protein is DNA-directed RNA polymerase subunit alpha of Methylorubrum extorquens (strain CM4 / NCIMB 13688) (Methylobacterium extorquens).